Reading from the N-terminus, the 477-residue chain is UDP-N-acetylmuramate--L-alanine ligase (477 aa).

117-123 (GTHGKTT) is an ATP binding site.

It belongs to the MurCDEF family.

The protein resides in the cytoplasm. It catalyses the reaction UDP-N-acetyl-alpha-D-muramate + L-alanine + ATP = UDP-N-acetyl-alpha-D-muramoyl-L-alanine + ADP + phosphate + H(+). Its pathway is cell wall biogenesis; peptidoglycan biosynthesis. In terms of biological role, cell wall formation. The chain is UDP-N-acetylmuramate--L-alanine ligase from Phenylobacterium zucineum (strain HLK1).